The sequence spans 78 residues: Large ribosomal subunit protein bL28 (78 aa).

This sequence belongs to the bacterial ribosomal protein bL28 family.

This is Large ribosomal subunit protein bL28 from Acaryochloris marina (strain MBIC 11017).